The following is a 456-amino-acid chain: Glycosyl hydrolase family 109 protein (456 aa).

Residues 1 to 31 (MKLNRRHFLKTAGLSAAGILTSQLPLSSAEA) constitute a signal peptide (tat-type signal). NAD(+)-binding positions include 62 to 63 (QR), Asp-84, 133 to 136 (WEWH), 153 to 154 (EV), and Asn-182. Substrate contacts are provided by residues Tyr-211, Arg-230, 242–245 (YPTH), and Tyr-324. Position 242 (Tyr-242) interacts with NAD(+).

This sequence belongs to the Gfo/Idh/MocA family. Glycosyl hydrolase 109 subfamily. NAD(+) serves as cofactor. Predicted to be exported by the Tat system. The position of the signal peptide cleavage has not been experimentally proven.

Functionally, glycosidase. This is Glycosyl hydrolase family 109 protein from Shewanella pealeana (strain ATCC 700345 / ANG-SQ1).